Reading from the N-terminus, the 752-residue chain is Photosystem I P700 chlorophyll a apoprotein A1 (752 aa).

8 helical membrane-spanning segments follow: residues 73–96, 159–182, 198–222, 294–312, 349–372, 388–414, 436–458, and 533–551; these read IFSAHFGHLAVVFIWLSGAYFHGA, LYVTAIGALVMAALMLFAGWFHYH, MNHHLAGLFGLGSLSWAGHQIHVSL, RAHHHLAIAVLFIVAGHMY, WHAQLSLNLALFGSLSIIVAHHMY, LCLFTHHVWIGGFLIVGAGAHAAIFMV, AIISHLNWVCIFLGFHSFGLYIH, and FLVHHIHAFTIHVTVLILL. Positions 575 and 584 each coordinate [4Fe-4S] cluster. 2 helical membrane-spanning segments follow: residues 591–612 and 666–688; these read HVFLGLFWMYNSLSVVLFHFSW and LSAYGLMFLGAHFIWAFSLMFLF. Residue H677 participates in chlorophyll a' binding. 2 residues coordinate chlorophyll a: M685 and Y693. Residue W694 participates in phylloquinone binding. The chain crosses the membrane as a helical span at residues 726-746; the sequence is AVGVAHYLLGGIATTWSFFHA.

Belongs to the PsaA/PsaB family. As to quaternary structure, the PsaA/B heterodimer binds the P700 chlorophyll special pair and subsequent electron acceptors. PSI consists of a core antenna complex that captures photons, and an electron transfer chain that converts photonic excitation into a charge separation. The eukaryotic PSI reaction center is composed of at least 11 subunits. It depends on P700 is a chlorophyll a/chlorophyll a' dimer, A0 is one or more chlorophyll a, A1 is one or both phylloquinones and FX is a shared 4Fe-4S iron-sulfur center. as a cofactor.

The protein resides in the plastid. It is found in the cyanelle thylakoid membrane. The catalysed reaction is reduced [plastocyanin] + hnu + oxidized [2Fe-2S]-[ferredoxin] = oxidized [plastocyanin] + reduced [2Fe-2S]-[ferredoxin]. Functionally, psaA and PsaB bind P700, the primary electron donor of photosystem I (PSI), as well as the electron acceptors A0, A1 and FX. PSI is a cytochrome c6-ferredoxin oxidoreductase, converting photonic excitation into a charge separation, which transfers an electron from the donor P700 chlorophyll pair to the spectroscopically characterized acceptors A0, A1, FX, FA and FB in turn. Oxidized P700 is reduced on the lumenal side of the thylakoid membrane by cytochrome c6. This Cyanophora paradoxa protein is Photosystem I P700 chlorophyll a apoprotein A1.